The sequence spans 65 residues: Large ribosomal subunit protein bL35 (65 aa).

The segment at 1-26 (MPKMKTNKSAQKRFKKTGSGRFKCKQ) is disordered. The span at 10–26 (AQKRFKKTGSGRFKCKQ) shows a compositional bias: basic residues.

Belongs to the bacterial ribosomal protein bL35 family.

This is Large ribosomal subunit protein bL35 from Hydrogenovibrio crunogenus (strain DSM 25203 / XCL-2) (Thiomicrospira crunogena).